Reading from the N-terminus, the 389-residue chain is Chalcone synthase E (389 aa).

The active site involves cysteine 164.

It belongs to the thiolase-like superfamily. Chalcone/stilbene synthases family.

The catalysed reaction is (E)-4-coumaroyl-CoA + 3 malonyl-CoA + 3 H(+) = 2',4,4',6'-tetrahydroxychalcone + 3 CO2 + 4 CoA. Its pathway is secondary metabolite biosynthesis; flavonoid biosynthesis. Its function is as follows. The primary product of this enzyme is 4,2',4',6'-tetrahydroxychalcone (also termed naringenin-chalcone or chalcone) which can under specific conditions spontaneously isomerize into naringenin. This is Chalcone synthase E (CHSE) from Ipomoea purpurea (Common morning glory).